The following is a 419-amino-acid chain: Hyaluronan synthase (419 aa).

Transmembrane regions (helical) follow at residues 8–28, 33–53, 318–338, 345–365, and 376–396; these read LIVLSFIFLISILIYLNMYLF, VGIYGVILITYLVIKLGLSFL, IVALWTIFEVVMFMMLIVAIG, AIQLDLIKLFAFLSIIFIVAL, and PASFLLSPLYGILHLFVLQPL.

Belongs to the NodC/HAS family. Mg(2+) serves as cofactor.

The protein resides in the cell membrane. It catalyses the reaction [hyaluronan](n) + UDP-N-acetyl-alpha-D-glucosamine = N-acetyl-beta-D-glucosaminyl-(1-&gt;4)-[hyaluronan](n) + UDP + H(+). The catalysed reaction is N-acetyl-beta-D-glucosaminyl-(1-&gt;4)-[hyaluronan](n) + UDP-alpha-D-glucuronate = [hyaluronan](n+1) + UDP + H(+). Its pathway is glycan biosynthesis; hyaluronan biosynthesis. Its function is as follows. Glycosaminoglycan synthesis. The hyaluronic acid capsule is involved in the pathogenicity of group A Streptococci; it may be the major virulence determinant. This chain is Hyaluronan synthase (hasA), found in Streptococcus pyogenes serotype M1.